Here is a 244-residue protein sequence, read N- to C-terminus: 5-oxoprolinase subunit A (244 aa).

It belongs to the LamB/PxpA family. As to quaternary structure, forms a complex composed of PxpA, PxpB and PxpC.

The enzyme catalyses 5-oxo-L-proline + ATP + 2 H2O = L-glutamate + ADP + phosphate + H(+). In terms of biological role, catalyzes the cleavage of 5-oxoproline to form L-glutamate coupled to the hydrolysis of ATP to ADP and inorganic phosphate. This Salmonella paratyphi C (strain RKS4594) protein is 5-oxoprolinase subunit A.